The chain runs to 337 residues: MATALCPLRALGQTAFRPRTRRLHLSAPRADAVVISGRKLARQIRQEARHEVEQWVAAGNKRPHLSVVLVGENPASHSYVLNKTKAAADVGISSETILKPASITEEELLDLISKLNNDANVDGLLVQLPLPEHIDERKICNAVTPDKDVDGFHVINVGRMCLDQYSMLPATPWGVWEIIKRTGIPTLGKNVVVAGRSKNVGMPIAMLLHTDGRHERPGGDATVTISHRYTPKEQLKQHTIRADIVVAAAGIPNLITADMIKEGAAVIDVGITRVQDPITAKSRLVGDVDFEGVKKKASYITPVPGGVGPMTVAMLMKNTIIAAKKLLKPKALEALTA.

A mitochondrion-targeting transit peptide spans 1-30; the sequence is MATALCPLRALGQTAFRPRTRRLHLSAPRA. Residues 79–83 and 126–128 each bind substrate; these read YVLNK and VQL. Residues 195–197 and Arg-228 contribute to the NAD(+) site; that span reads GRS. Residue 304 to 308 participates in substrate binding; the sequence is PGGVG.

Belongs to the tetrahydrofolate dehydrogenase/cyclohydrolase family. Mg(2+) is required as a cofactor.

The protein resides in the mitochondrion. It carries out the reaction (6R)-5,10-methylene-5,6,7,8-tetrahydrofolate + NAD(+) = (6R)-5,10-methenyltetrahydrofolate + NADH. The catalysed reaction is (6R)-5,10-methenyltetrahydrofolate + H2O = (6R)-10-formyltetrahydrofolate + H(+). In terms of biological role, although its dehydrogenase activity is NAD-specific, it can also utilize NADP at a reduced efficiency. This is Bifunctional methylenetetrahydrofolate dehydrogenase/cyclohydrolase, mitochondrial (MTHFD2) from Gallus gallus (Chicken).